Consider the following 1108-residue polypeptide: Mediator of RNA polymerase II transcription subunit 14 (1108 aa).

3 disordered regions span residues 1 to 30, 35 to 54, and 1048 to 1108; these read MAAV…GGDT, SSEI…DNPL, and QQQR…VDLT. Positions 35-52 are enriched in polar residues; sequence SSEIVQQQTPARSLQSDN. A compositionally biased stretch (low complexity) spans 1048-1080; it reads QQQRQPVVQPGQQPQVQNQANGVMNRGPQRPGL.

Belongs to the Mediator complex subunit 14 family. In terms of assembly, component of the Mediator complex.

Its subcellular location is the nucleus. In terms of biological role, component of the Mediator complex, a coactivator involved in the regulated transcription of nearly all RNA polymerase II-dependent genes. Mediator functions as a bridge to convey information from gene-specific regulatory proteins to the basal RNA polymerase II transcription machinery. Mediator is recruited to promoters by direct interactions with regulatory proteins and serves as a scaffold for the assembly of a functional preinitiation complex with RNA polymerase II and the general transcription factors. The polypeptide is Mediator of RNA polymerase II transcription subunit 14 (RGR1) (Pyricularia oryzae (strain 70-15 / ATCC MYA-4617 / FGSC 8958) (Rice blast fungus)).